The sequence spans 162 residues: Disulfide bond formation protein B (162 aa).

The Cytoplasmic segment spans residues 1–8 (MTPLFRKA). The chain crosses the membrane as a helical span at residues 9–25 (VWLLFAVSVCAFAGSLA). The Periplasmic segment spans residues 26–43 (AQYVLGMEPCVLCISQRL). Cysteines 35 and 38 form a disulfide. The chain crosses the membrane as a helical span at residues 44-60 (CVLATALCTAIVLMCRP). Topologically, residues 61 to 67 (RRRAGGL) are cytoplasmic. Residues 68–85 (FGAVFISIPAVTGISVAA) form a helical membrane-spanning segment. Residues 86-141 (YQLWLQSLPPGTAPSCGAPWTFRLKGWPLFDWFEPVVRGFGNCAEPDYLLGIALPV) lie on the Periplasmic side of the membrane. Residues C101 and C128 are joined by a disulfide bond. Residues 142–160 (WSVAYFLAVVLTVWWAWAR) traverse the membrane as a helical segment. Residues 161–162 (AK) are Cytoplasmic-facing.

It belongs to the DsbB family.

It localises to the cell inner membrane. Functionally, required for disulfide bond formation in some periplasmic proteins. Acts by oxidizing the DsbA protein. The protein is Disulfide bond formation protein B of Neisseria meningitidis serogroup B (strain ATCC BAA-335 / MC58).